We begin with the raw amino-acid sequence, 2543 residues long: Zinc finger FYVE domain-containing protein 26 (2543 aa).

S297 is subject to Phosphoserine. 4 disordered regions span residues 523 to 545 (ECRDSPSEDPALAAEPANDSLSS), 609 to 636 (GLLGLRSPSESPQHIAQPERKSEQGCQE), 699 to 722 (LSSHSPPEKPKLPEGQSCSGSRDG), and 744 to 820 (VTSN…GRLQ). 3 positions are modified to phosphoserine: S615, S619, and S703. The segment covering 699–710 (LSSHSPPEKPKL) has biased composition (basic and acidic residues). Positions 767–776 (SLRRGRRTRR) are enriched in basic residues. The segment covering 786–806 (SNPSLESTSSELSTSTSEGSL) has biased composition (low complexity). At S802 the chain carries Phosphoserine. Residues 870-897 (MFMERYQEVIQELSRVEHKIENQNSDGG) are a coiled coil. Positions 1272–1299 (LSTLSSPKPTGNSTLERKPHSSPRDSSL) are disordered. Polar residues predominate over residues 1273–1285 (STLSSPKPTGNST). Residues S1744, S1765, S1784, and S1786 each carry the phosphoserine modification. Residues 1780 to 1812 (STIHSPSPRERSFPESQPPPEFVPPATPPGRPQ) are disordered. Residues 1795–1810 (SQPPPEFVPPATPPGR) are compositionally biased toward pro residues. The FYVE-type zinc-finger motif lies at 1816-1876 (DESASICMVC…VCDQCYSYYN (61 aa)). Positions 1822, 1825, 1839, 1842, 1847, 1850, 1868, and 1871 each coordinate Zn(2+).

The protein belongs to the ZFYVE26 family. As to quaternary structure, interacts with AP5Z1, AP5B1, AP5S1 and SPG11. Interacts with TTC19 and KIF13A.

The protein localises to the cytoplasm. It is found in the cytoskeleton. It localises to the microtubule organizing center. The protein resides in the centrosome. Its subcellular location is the midbody. Phosphatidylinositol 3-phosphate-binding protein required for the abscission step in cytokinesis: recruited to the midbody during cytokinesis and acts as a regulator of abscission. May also be required for efficient homologous recombination DNA double-strand break repair. This is Zinc finger FYVE domain-containing protein 26 (ZFYVE26) from Ailuropoda melanoleuca (Giant panda).